The chain runs to 308 residues: Secreted frizzled-related protein 1 (308 aa).

The first 25 residues, 1-25 (MGGGRWAAAGALLALAAGLLAAGSA), serve as a signal peptide directing secretion. Positions 47–163 (TKPPQCVDIP…FPEGDVCIAM (117 aa)) constitute an FZ domain. 5 disulfide bridges follow: Cys52–Cys115, Cys62–Cys108, Cys99–Cys134, Cys123–Cys160, and Cys127–Cys151. N-linked (GlcNAc...) asparagine glycosylation is present at Asn167. 3 cysteine pairs are disulfide-bonded: Cys180–Cys250, Cys183–Cys252, and Cys197–Cys300. Residues 180–300 (CPPCDNELKS…FMKKMKNHEC (121 aa)) enclose the NTR domain.

It belongs to the secreted frizzled-related protein (sFRP) family. In terms of assembly, interacts with WNT1, WNT2, WNT4, WNT8, MYOC and FRZD6. As to expression, highest levels in aortic endothelium, heart, spleen and eye. Lower levels in lung, brain and kidney. Weak expression in liver, skeletal muscle and the medial layer of the aorta. In the cortical brain, localized to neurons and small blood vessels. In the retina, localized to the inner and outer nuclear layers with high expression in the neuronal cell bodies. In the heart, restricted to myocytes. In lung, highest expression found in the epithelium of terminal bronchioles. In kidney, localized to the epithelium of collecting ducts of the medulla and, in spleen, expression restricted to the red pulp in cells associated with the sinuses.

Its subcellular location is the secreted. Its function is as follows. Soluble frizzled-related proteins (sFRPS) function as modulators of Wnt signaling through direct interaction with Wnts. They have a role in regulating cell growth and differentiation in specific cell types. SFRP1 decreases intracellular beta-catenin levels. Has antiproliferative effects on vascular cells, in vitro and in vivo, and can induce, in vivo, an angiogenic response. In vascular cell cycle, delays the G1 phase and entry into the S phase. In kidney development, inhibits tubule formation and bud growth in metanephroi. Inhibits WNT1/WNT4-mediated TCF-dependent transcription. The chain is Secreted frizzled-related protein 1 (SFRP1) from Bos taurus (Bovine).